Reading from the N-terminus, the 730-residue chain is Double-strand break repair protein MRE11 (730 aa).

The Mn(2+) site is built by Asp-17, His-19, Asp-57, and Asn-124. His-125 acts as the Proton donor in catalysis. Mn(2+)-binding residues include His-213, His-241, and His-243. The tract at residues 521-730 (LSGQQKQAQR…SMPARKSKRY (210 aa)) is disordered. Acidic residues predominate over residues 581–591 (GDEDNLFEEEE). Residues 595–633 (KTTAKRAPTTRATRKTAAATRATTATKASAPAKKSIAAP) show a composition bias toward low complexity. A compositionally biased stretch (acidic residues) spans 645–659 (SAEEEEDVIMDDDDD). Positions 662–672 (PAPPVKAPPPK) are enriched in pro residues. Residues 685-704 (TRQTTLNFSQAERPTRTTQK) are compositionally biased toward polar residues. Acidic residues predominate over residues 708-719 (ISDDEISEDDAF).

It belongs to the MRE11/RAD32 family. Component of the MRN complex composed of two heterodimers RAD50 and MRE11 associated with a single NBS1. Requires Mn(2+) as cofactor.

Its subcellular location is the nucleus. It localises to the chromosome. The protein resides in the telomere. Core component of the MRN complex, which plays a central role in double-strand break (DSB) repair, DNA recombination, maintenance of telomere integrity and meiosis. The MRN complex is involved in the repair of DNA double-strand breaks (DSBs) via homologous recombination (HR), an error-free mechanism which primarily occurs during S and G2 phases. The complex (1) mediates the end resection of damaged DNA, which generates proper single-stranded DNA, a key initial steps in HR, and is (2) required for the recruitment of other repair factors and efficient activation of ATM and ATR upon DNA damage. Within the MRN complex, MRE11 possesses both single-strand endonuclease activity and double-strand-specific 3'-5' exonuclease activity. MRE11 first endonucleolytically cleaves the 5' strand at DNA DSB ends to prevent non-homologous end joining (NHEJ) and licence HR. It then generates a single-stranded DNA gap via 3' to 5' exonucleolytic degradation, which is required for single-strand invasion and recombination. This Chaetomium thermophilum (strain DSM 1495 / CBS 144.50 / IMI 039719) (Thermochaetoides thermophila) protein is Double-strand break repair protein MRE11.